The sequence spans 84 residues: PAMP-induced secreted peptide 2 (84 aa).

Residues 1 to 24 (MMMNKNVLSSILFFMLIGSVLVES) form the signal peptide. The disordered stretch occupies residues 50 to 84 (KDSGPSPGEGHKVVDRKDTFRFVKHSGPSPSGPGH). The segment covering 58–70 (EGHKVVDRKDTFR) has biased composition (basic and acidic residues). A 4-hydroxyproline mark is found at Pro-77 and Pro-79.

Post-translationally, contains 4-hydroxyproline; hydroxylated on Pro-77 and Pro-79.

It is found in the secreted. It localises to the extracellular space. The protein localises to the apoplast. In terms of biological role, endogenous secreted peptide that acts as elicitor of immune response and positive regulator of defense response. Amplifies the immune response triggered by flg22, the active epitope of bacterial flagellin. Acts as a negative regulator of root growth. This is PAMP-induced secreted peptide 2 from Arabidopsis thaliana (Mouse-ear cress).